Consider the following 163-residue polypeptide: Small ribosomal subunit protein bS6 (163 aa).

The segment at 97-163 is disordered; sequence EEGQTAMLTN…GRNEGEGDRA (67 aa). The segment covering 122-163 has biased composition (basic and acidic residues); it reads RGPRRDFGDRGPRRDFGDRGPRRDGDGPRAEGGRNEGEGDRA.

Belongs to the bacterial ribosomal protein bS6 family.

Functionally, binds together with bS18 to 16S ribosomal RNA. The polypeptide is Small ribosomal subunit protein bS6 (Rhodospirillum centenum (strain ATCC 51521 / SW)).